Reading from the N-terminus, the 47-residue chain is Large ribosomal subunit protein bL34 (47 aa).

The protein belongs to the bacterial ribosomal protein bL34 family.

This chain is Large ribosomal subunit protein bL34, found in Mycolicibacterium vanbaalenii (strain DSM 7251 / JCM 13017 / BCRC 16820 / KCTC 9966 / NRRL B-24157 / PYR-1) (Mycobacterium vanbaalenii).